Here is a 221-residue protein sequence, read N- to C-terminus: Anti-sigma-W factor RsiW (221 aa).

Residues 1–87 lie on the Cytoplasmic side of the membrane; sequence MKTCHSHDEL…AKWKLKAKRH (87 aa). Zn(2+) contacts are provided by H30, C34, and C37. A helical transmembrane segment spans residues 88–108; that stretch reads PILVAAAIFLIMMSAAFFSAW. The Extracellular portion of the chain corresponds to 109–221; sequence SHTTDGIAVS…GEDDPHSTDN (113 aa).

The protein belongs to the zinc-associated anti-sigma factor (ZAS) superfamily. Anti-sigma-W factor family. Zn(2+) serves as cofactor. Is processed by three successive proteolytic events. First, the extracellular region of RsiW is cleaved by PrsW (Site-1 cleavage) in response to cell envelope stresses. Next, it undergoes cleavage at an intramembrane site (Site-2 cleavage) mediated by RasP. This cleavage uncovers a cryptic proteolytic tag with conserved alanine residues in the transmembrane segment, that is recognized mainly by the ClpXP protease, which completely degrades the protein in the cytoplasm and leads to the induction of the sigma-W-controlled genes.

It localises to the membrane. Its function is as follows. Is the anti-sigma factor for SigW. The presence of RsiW leads to the inactivation of SigW, and its proteolytic destruction to sigma-W activation. In Shouchella clausii (strain KSM-K16) (Alkalihalobacillus clausii), this protein is Anti-sigma-W factor RsiW (rsiW).